Reading from the N-terminus, the 993-residue chain is uncharacterized protein (993 aa).

Residues 1 to 28 (MKLFPRSILITLVLSFALNLGIVTKIHA) form the signal peptide. Transmembrane regions (helical) follow at residues 331-351 (IVTAFLTLYVMFFGFKLLLAG), 359-379 (YINFILKMIFVTYFSIGINIT), 392-412 (MIQWAFPFLLDGINGLASWVM), 494-514 (MLVSLALSYPLLVISVAAFMV), 521-541 (MISIVILGILAPLFVPMFLFA), 554-574 (MISFLLQPMVVVTFMITMFSV), and 699-719 (IKNILLALVMACFTLYLMYNF). The tract at residues 779–904 (GQGGGASDLE…EKVDSTSKGT (126 aa)) is disordered. Low complexity predominate over residues 805-829 (TSAPAVTTPTASSSVASSSPKTVSS). Positions 838-850 (PPAPTEAVSPPPA) are enriched in pro residues. Residues 866-879 (IIRDNNQESKKEID) are compositionally biased toward basic and acidic residues.

The protein belongs to the TrbL/VirB6 family.

It localises to the cell membrane. This is an uncharacterized protein from Rickettsia conorii (strain ATCC VR-613 / Malish 7).